Here is a 904-residue protein sequence, read N- to C-terminus: DNA mismatch repair protein MutS (904 aa).

Position 654-661 (654-661 (GPNMAGKS)) interacts with ATP.

The protein belongs to the DNA mismatch repair MutS family.

Its function is as follows. This protein is involved in the repair of mismatches in DNA. It is possible that it carries out the mismatch recognition step. This protein has a weak ATPase activity. This Caulobacter sp. (strain K31) protein is DNA mismatch repair protein MutS.